Consider the following 708-residue polypeptide: Putative adhesion G protein-coupled receptor F2P (708 aa).

At 1-451 (MGLTAYGNRR…ESLILTYITY (451 aa)) the chain is on the extracellular side. Residues asparagine 21, asparagine 220, asparagine 252, asparagine 260, asparagine 305, asparagine 313, and asparagine 358 are each glycosylated (N-linked (GlcNAc...) asparagine). The GAIN-B domain maps to 293–442 (MGTTISGDNI…SILMSPHILE (150 aa)). 2 disulfide bridges follow: cysteine 394-cysteine 421 and cysteine 409-cysteine 423. The interval 394-442 (CVGWHSVENRWDQQACKMIQENSQQAVCKCRPSKLFTSFSILMSPHILE) is GPS. A helical transmembrane segment spans residues 452–472 (VGLGISICSLILCLSIEVLVW). Over 473–487 (SQVTKTEITYLRHVC) the chain is Cytoplasmic. The chain crosses the membrane as a helical span at residues 488-508 (IVNIAATLLMADVWFIVASFL). At 509-530 (SGPITHHKGCVAATFFVHFFYL) the chain is on the extracellular side. A helical transmembrane segment spans residues 531 to 551 (SVFFWMLAKALLILYGIMIVF). Topologically, residues 552–557 (HTLPKS) are cytoplasmic. A helical transmembrane segment spans residues 558 to 578 (VLVASLFSVGYGCPLAIAAIT). Topologically, residues 579–606 (VAATEPGKGYLRPEICWLNWDMTKALLA) are extracellular. A helical transmembrane segment spans residues 607 to 627 (FVIPALAIVVVNLITVTLVIV). Residues 628 to 650 (KTQRAAIGNSMFQEVRAIVRISK) lie on the Cytoplasmic side of the membrane. A helical membrane pass occupies residues 651–671 (NIAILTPLLGLTWGFGVATVI). At 672–674 (DDR) the chain is on the extracellular side. The helical transmembrane segment at 675–695 (SLAFHIIFSLLNAFQVSPDAS) threads the bilayer. At 696 to 708 (DQVQSERIHEDVL) the chain is on the cytoplasmic side.

The protein belongs to the G-protein coupled receptor 2 family. Adhesion G-protein coupled receptor (ADGR) subfamily. In terms of tissue distribution, high expression in kidney. Up-regulated in lung adenocarcinomas and prostate cancers.

It is found in the membrane. Functionally, orphan receptor. In Homo sapiens (Human), this protein is Putative adhesion G protein-coupled receptor F2P.